The following is a 61-amino-acid chain: Large ribosomal subunit protein uL30 (61 aa).

The protein belongs to the universal ribosomal protein uL30 family. As to quaternary structure, part of the 50S ribosomal subunit.

This chain is Large ribosomal subunit protein uL30, found in Marinomonas sp. (strain MWYL1).